A 145-amino-acid polypeptide reads, in one-letter code: Large ribosomal subunit protein uL15 (145 aa).

A disordered region spans residues 1–57; it reads MKLNDLSPAPGSRREKHRPGRGIGSGLGKTGGRGHKGQTSRSGGTIAPGFEGGQQPL. Residues 21 to 31 are compositionally biased toward gly residues; sequence RGIGSGLGKTG.

It belongs to the universal ribosomal protein uL15 family. Part of the 50S ribosomal subunit.

Its function is as follows. Binds to the 23S rRNA. The polypeptide is Large ribosomal subunit protein uL15 (Pseudomonas fluorescens (strain SBW25)).